The primary structure comprises 409 residues: L-cysteine:1D-myo-inositol 2-amino-2-deoxy-alpha-D-glucopyranoside ligase (409 aa).

Residues 1–27 are disordered; that stretch reads MHAWPASEVPALPGQGRDLRIHDTATG. Cys43 lines the Zn(2+) pocket. L-cysteinyl-5'-AMP-binding positions include 43-46, Thr58, and 81-83; these read CGIT and NVT. Positions 45 to 55 match the 'HIGH' region motif; it reads ITPYDATHMGH. The 'ERGGDP' region motif lies at 183–188; the sequence is ERGGDP. Trp224 contributes to the L-cysteinyl-5'-AMP binding site. Cys228 provides a ligand contact to Zn(2+). 246 to 248 is an L-cysteinyl-5'-AMP binding site; sequence GSD. His253 contacts Zn(2+). Val280 serves as a coordination point for L-cysteinyl-5'-AMP. A 'KMSKS' region motif is present at residues 286–290; that stretch reads KMSKS.

The protein belongs to the class-I aminoacyl-tRNA synthetase family. MshC subfamily. Monomer. Zn(2+) is required as a cofactor.

The enzyme catalyses 1D-myo-inositol 2-amino-2-deoxy-alpha-D-glucopyranoside + L-cysteine + ATP = 1D-myo-inositol 2-(L-cysteinylamino)-2-deoxy-alpha-D-glucopyranoside + AMP + diphosphate + H(+). Functionally, catalyzes the ATP-dependent condensation of GlcN-Ins and L-cysteine to form L-Cys-GlcN-Ins. In Streptomyces coelicolor (strain ATCC BAA-471 / A3(2) / M145), this protein is L-cysteine:1D-myo-inositol 2-amino-2-deoxy-alpha-D-glucopyranoside ligase (mshC).